A 495-amino-acid chain; its full sequence is MDDQKESLRKIITTLALKNEEIQNFICSLKQSLENLEANSNRVQEDLESEFSSLHSVLDDLKEGMVTRIKQERASRTYELQSQLGACTKALESSEELLEFANQTLCSSENDSFTQAAKDIKDSVTMAPAFRLSLKAKASDSMNHMMVDFTHERNLLQSITFLPVPATPEIHVADCQVFDNTVTVVWTLPEPDSKIDHYILEHRKTNHEGPPRAREDYPWMVVEGIKETEYTLTGVRFDTRYMTFRVKACNKAVAGEFSEPVTLETHAFVFKLDASSSHQNLKVEDLSVEWDSSGGKVAVQDIRKEKNRTNSPMHSPARTAMMSPKRAPSARVGRDRFTAESYTVLGDTMIDAGQHYWEVRFDKESKAFAAGVALRSLGRFDQLGKSNASWCIHLNNWLQQSLTAKHNNKARTLDCSIPDRIGIYCNYEEGTLSFYNSRNKTLLHTFRTKFQQPVIPAFMVWNGSFSVQTGLQVPSIVLSGQKRNSNTSSSNASLT.

Residues Gln4–Glu99 adopt a coiled-coil conformation. The COS domain occupies Leu105 to Leu162. In terms of domain architecture, Fibronectin type-III spans Val164–Phe268. The 196-residue stretch at Leu281–Ile476 folds into the B30.2/SPRY domain. The segment at Lys306 to Val332 is disordered. At Ser490 the chain carries Phosphoserine.

Oligomerization is required for binding to microtubules.

The protein localises to the cytoplasm. It is found in the cytoskeleton. The protein resides in the microtubule organizing center. Its subcellular location is the centrosome. It localises to the nucleus. The protein localises to the cleavage furrow. In terms of biological role, may be involved in microtubule organization and stabilization. The sequence is that of Fibronectin type III and SPRY domain-containing protein 1 (fsd1) from Danio rerio (Zebrafish).